Consider the following 260-residue polypeptide: Flap endonuclease Xni (260 aa).

Asp-112 serves as a coordination point for Mg(2+). Residues 168 to 258 (LQPSQLVDFW…FNLKDLRYTP (91 aa)) enclose the 5'-3' exonuclease domain. K(+) is bound by residues Leu-179, Val-190, and Ile-193. An interaction with DNA region spans residues 192 to 197 (GIGEKT).

It belongs to the Xni family. It depends on Mg(2+) as a cofactor. K(+) is required as a cofactor.

In terms of biological role, has flap endonuclease activity. During DNA replication, flap endonucleases cleave the 5'-overhanging flap structure that is generated by displacement synthesis when DNA polymerase encounters the 5'-end of a downstream Okazaki fragment. The sequence is that of Flap endonuclease Xni from Tolumonas auensis (strain DSM 9187 / NBRC 110442 / TA 4).